The primary structure comprises 1349 residues: Zinc finger protein 804B (1349 aa).

The C2H2-type zinc finger occupies 55–79; sequence FYCELCDKQYHKHQEFDNHINSYDH. Positions 985–1010 are disordered; sequence YASESRNDQDSAIPRTTEKDKSKSSH.

The protein is Zinc finger protein 804B (ZNF804B) of Homo sapiens (Human).